Here is a 151-residue protein sequence, read N- to C-terminus: Large ribosomal subunit protein uL22 (151 aa).

This sequence belongs to the universal ribosomal protein uL22 family. Part of the 50S ribosomal subunit.

Its function is as follows. This protein binds specifically to 23S rRNA. It makes multiple contacts with different domains of the 23S rRNA in the assembled 50S subunit and ribosome. The globular domain of the protein is located near the polypeptide exit tunnel on the outside of the subunit, while an extended beta-hairpin is found that lines the wall of the exit tunnel in the center of the 70S ribosome. This chain is Large ribosomal subunit protein uL22, found in Thermoplasma acidophilum (strain ATCC 25905 / DSM 1728 / JCM 9062 / NBRC 15155 / AMRC-C165).